Here is a 248-residue protein sequence, read N- to C-terminus: MIDENKQVNHTSQQLGESTEVKQAIMSESPAQINNNESANEVTEPVAIPTNVVGDTTATEDNGFTATQIQEANTAALAELTQQISSLKTQLDERSTQYMRIAADFENYRKRTQKEKEELDLQVKRNTILELLPIVDNFERARSHLKPQTESEMTIHKSYQGVYKQLVDSLKRLGVSPMRPEGQEFDPNLHEAVMREPTDEHPEGTVLEELVRGYYLGDRVLRHSMVKVAAPKEDTLPAQENQSSPADS.

Positions 229–248 (AAPKEDTLPAQENQSSPADS) are disordered. The segment covering 238-248 (AQENQSSPADS) has biased composition (polar residues).

It belongs to the GrpE family. Homodimer.

It is found in the cytoplasm. Participates actively in the response to hyperosmotic and heat shock by preventing the aggregation of stress-denatured proteins, in association with DnaK and GrpE. It is the nucleotide exchange factor for DnaK and may function as a thermosensor. Unfolded proteins bind initially to DnaJ; upon interaction with the DnaJ-bound protein, DnaK hydrolyzes its bound ATP, resulting in the formation of a stable complex. GrpE releases ADP from DnaK; ATP binding to DnaK triggers the release of the substrate protein, thus completing the reaction cycle. Several rounds of ATP-dependent interactions between DnaJ, DnaK and GrpE are required for fully efficient folding. The protein is Protein GrpE of Nostoc sp. (strain PCC 7120 / SAG 25.82 / UTEX 2576).